Here is a 187-residue protein sequence, read N- to C-terminus: UPF0200 protein PYRAB09750 (187 aa).

7–14 serves as a coordination point for ATP; that stretch reads GMPGSGKG.

The protein belongs to the UPF0200 family.

This chain is UPF0200 protein PYRAB09750, found in Pyrococcus abyssi (strain GE5 / Orsay).